Here is an 824-residue protein sequence, read N- to C-terminus: Leucine--tRNA ligase (824 aa).

The short motif at 42-52 (PYPSGKIHMGH) is the 'HIGH' region element. The 'KMSKS' region signature appears at 581-585 (KMSKS). Residue Lys-584 coordinates ATP.

The protein belongs to the class-I aminoacyl-tRNA synthetase family.

The protein resides in the cytoplasm. The catalysed reaction is tRNA(Leu) + L-leucine + ATP = L-leucyl-tRNA(Leu) + AMP + diphosphate. The protein is Leucine--tRNA ligase of Geobacter sp. (strain M21).